Consider the following 176-residue polypeptide: ATP-dependent protease subunit HslV (176 aa).

Residue Thr5 is part of the active site. Na(+) contacts are provided by Ala161, Cys164, and Thr167.

Belongs to the peptidase T1B family. HslV subfamily. A double ring-shaped homohexamer of HslV is capped on each side by a ring-shaped HslU homohexamer. The assembly of the HslU/HslV complex is dependent on binding of ATP.

Its subcellular location is the cytoplasm. The catalysed reaction is ATP-dependent cleavage of peptide bonds with broad specificity.. With respect to regulation, allosterically activated by HslU binding. In terms of biological role, protease subunit of a proteasome-like degradation complex believed to be a general protein degrading machinery. This Caldicellulosiruptor bescii (strain ATCC BAA-1888 / DSM 6725 / KCTC 15123 / Z-1320) (Anaerocellum thermophilum) protein is ATP-dependent protease subunit HslV.